Consider the following 82-residue polypeptide: ATP synthase subunit c, chloroplastic (82 aa).

2 helical membrane-spanning segments follow: residues 4–24 (IISA…AIGP) and 57–77 (LAFM…LLFA).

Belongs to the ATPase C chain family. As to quaternary structure, F-type ATPases have 2 components, F(1) - the catalytic core - and F(0) - the membrane proton channel. F(1) has five subunits: alpha(3), beta(3), gamma(1), delta(1), epsilon(1). F(0) has four main subunits: a(1), b(1), b'(1) and c(10-14). The alpha and beta chains form an alternating ring which encloses part of the gamma chain. F(1) is attached to F(0) by a central stalk formed by the gamma and epsilon chains, while a peripheral stalk is formed by the delta, b and b' chains.

Its subcellular location is the plastid. It is found in the chloroplast thylakoid membrane. Its function is as follows. F(1)F(0) ATP synthase produces ATP from ADP in the presence of a proton or sodium gradient. F-type ATPases consist of two structural domains, F(1) containing the extramembraneous catalytic core and F(0) containing the membrane proton channel, linked together by a central stalk and a peripheral stalk. During catalysis, ATP synthesis in the catalytic domain of F(1) is coupled via a rotary mechanism of the central stalk subunits to proton translocation. In terms of biological role, key component of the F(0) channel; it plays a direct role in translocation across the membrane. A homomeric c-ring of between 10-14 subunits forms the central stalk rotor element with the F(1) delta and epsilon subunits. The polypeptide is ATP synthase subunit c, chloroplastic (Trieres chinensis (Marine centric diatom)).